The primary structure comprises 462 residues: L-seryl-tRNA(Sec) selenium transferase (462 aa).

Lysine 292 carries the post-translational modification N6-(pyridoxal phosphate)lysine.

Belongs to the SelA family. Requires pyridoxal 5'-phosphate as cofactor.

It is found in the cytoplasm. The catalysed reaction is L-seryl-tRNA(Sec) + selenophosphate + H(+) = L-selenocysteinyl-tRNA(Sec) + phosphate. It functions in the pathway aminoacyl-tRNA biosynthesis; selenocysteinyl-tRNA(Sec) biosynthesis; selenocysteinyl-tRNA(Sec) from L-seryl-tRNA(Sec) (bacterial route): step 1/1. In terms of biological role, converts seryl-tRNA(Sec) to selenocysteinyl-tRNA(Sec) required for selenoprotein biosynthesis. The polypeptide is L-seryl-tRNA(Sec) selenium transferase (Clostridium perfringens (strain 13 / Type A)).